The chain runs to 83 residues: Cytochrome b559 subunit alpha (83 aa).

The helical transmembrane segment at 21 to 35 (VIHSITIPSLFIAGW) threads the bilayer. H23 lines the heme pocket.

It belongs to the PsbE/PsbF family. Heterodimer of an alpha subunit and a beta subunit. PSII is composed of 1 copy each of membrane proteins PsbA, PsbB, PsbC, PsbD, PsbE, PsbF, PsbH, PsbI, PsbJ, PsbK, PsbL, PsbM, PsbT, PsbX, PsbY, PsbZ, Psb30/Ycf12, at least 3 peripheral proteins of the oxygen-evolving complex and a large number of cofactors. It forms dimeric complexes. It depends on heme b as a cofactor.

Its subcellular location is the plastid. The protein localises to the chloroplast thylakoid membrane. Functionally, this b-type cytochrome is tightly associated with the reaction center of photosystem II (PSII). PSII is a light-driven water:plastoquinone oxidoreductase that uses light energy to abstract electrons from H(2)O, generating O(2) and a proton gradient subsequently used for ATP formation. It consists of a core antenna complex that captures photons, and an electron transfer chain that converts photonic excitation into a charge separation. The sequence is that of Cytochrome b559 subunit alpha from Ginkgo biloba (Ginkgo).